The chain runs to 227 residues: MAHAAQVGLQDATSPIMEELIIFHDHALMIIFLICFLVLYALFLTLTTKLTSTNISDAQEMETVWTILPAIILVLIALPSLRILYMTDEINDPSFTIKSIGHQWYWTYEYTDYGGLIFNSYMLPPLFLEPGDLRLLDVDNRVVLPVEAPVRMMITSQDVLHSWAVPTLGLKTDAIPGRLNQTTFTATRPGLYYGQCSEICGANHSFMPIVLELIPLKIFEMGPVFTL.

The Mitochondrial intermembrane segment spans residues 1 to 14; it reads MAHAAQVGLQDATS. A helical transmembrane segment spans residues 15–45; the sequence is PIMEELIIFHDHALMIIFLICFLVLYALFLT. Over 46-59 the chain is Mitochondrial matrix; that stretch reads LTTKLTSTNISDAQ. The chain crosses the membrane as a helical span at residues 60–87; that stretch reads EMETVWTILPAIILVLIALPSLRILYMT. Residues 88 to 227 are Mitochondrial intermembrane-facing; that stretch reads DEINDPSFTI…IFEMGPVFTL (140 aa). Cu cation contacts are provided by histidine 161, cysteine 196, glutamate 198, cysteine 200, histidine 204, and methionine 207. Mg(2+) is bound at residue glutamate 198.

The protein belongs to the cytochrome c oxidase subunit 2 family. Component of the cytochrome c oxidase (complex IV, CIV), a multisubunit enzyme composed of 14 subunits. The complex is composed of a catalytic core of 3 subunits MT-CO1, MT-CO2 and MT-CO3, encoded in the mitochondrial DNA, and 11 supernumerary subunits COX4I, COX5A, COX5B, COX6A, COX6B, COX6C, COX7A, COX7B, COX7C, COX8 and NDUFA4, which are encoded in the nuclear genome. The complex exists as a monomer or a dimer and forms supercomplexes (SCs) in the inner mitochondrial membrane with NADH-ubiquinone oxidoreductase (complex I, CI) and ubiquinol-cytochrome c oxidoreductase (cytochrome b-c1 complex, complex III, CIII), resulting in different assemblies (supercomplex SCI(1)III(2)IV(1) and megacomplex MCI(2)III(2)IV(2)). Found in a complex with TMEM177, COA6, COX18, COX20, SCO1 and SCO2. Interacts with TMEM177 in a COX20-dependent manner. Interacts with COX20. Interacts with COX16. It depends on Cu cation as a cofactor.

It is found in the mitochondrion inner membrane. It carries out the reaction 4 Fe(II)-[cytochrome c] + O2 + 8 H(+)(in) = 4 Fe(III)-[cytochrome c] + 2 H2O + 4 H(+)(out). In terms of biological role, component of the cytochrome c oxidase, the last enzyme in the mitochondrial electron transport chain which drives oxidative phosphorylation. The respiratory chain contains 3 multisubunit complexes succinate dehydrogenase (complex II, CII), ubiquinol-cytochrome c oxidoreductase (cytochrome b-c1 complex, complex III, CIII) and cytochrome c oxidase (complex IV, CIV), that cooperate to transfer electrons derived from NADH and succinate to molecular oxygen, creating an electrochemical gradient over the inner membrane that drives transmembrane transport and the ATP synthase. Cytochrome c oxidase is the component of the respiratory chain that catalyzes the reduction of oxygen to water. Electrons originating from reduced cytochrome c in the intermembrane space (IMS) are transferred via the dinuclear copper A center (CU(A)) of subunit 2 and heme A of subunit 1 to the active site in subunit 1, a binuclear center (BNC) formed by heme A3 and copper B (CU(B)). The BNC reduces molecular oxygen to 2 water molecules using 4 electrons from cytochrome c in the IMS and 4 protons from the mitochondrial matrix. The sequence is that of Cytochrome c oxidase subunit 2 (MT-CO2) from Gorilla gorilla beringei (Mountain gorilla).